A 486-amino-acid chain; its full sequence is ATP synthase subunit beta (486 aa).

An ATP-binding site is contributed by Gly164–Thr171.

The protein belongs to the ATPase alpha/beta chains family. As to quaternary structure, F-type ATPases have 2 components, CF(1) - the catalytic core - and CF(0) - the membrane proton channel. CF(1) has five subunits: alpha(3), beta(3), gamma(1), delta(1), epsilon(1). CF(0) has four main subunits: a(1), b(1), b'(1) and c(9-12).

The protein resides in the cellular thylakoid membrane. It catalyses the reaction ATP + H2O + 4 H(+)(in) = ADP + phosphate + 5 H(+)(out). Produces ATP from ADP in the presence of a proton gradient across the membrane. The catalytic sites are hosted primarily by the beta subunits. The chain is ATP synthase subunit beta from Prochlorococcus marinus subsp. pastoris (strain CCMP1986 / NIES-2087 / MED4).